Here is a 214-residue protein sequence, read N- to C-terminus: Pyridoxine/pyridoxamine 5'-phosphate oxidase (214 aa).

Substrate is bound by residues 7–10 and Lys-65; that span reads REEY. FMN-binding positions include 60–65, 75–76, Arg-81, Lys-82, and Gln-104; these read RTVLLK and FT. Residues Tyr-122, Arg-126, and Ser-130 each coordinate substrate. FMN is bound by residues 139-140 and Trp-184; that span reads QS. Residue 190 to 192 participates in substrate binding; it reads RLH. An FMN-binding site is contributed by Arg-194.

This sequence belongs to the pyridoxamine 5'-phosphate oxidase family. In terms of assembly, homodimer. FMN serves as cofactor.

It catalyses the reaction pyridoxamine 5'-phosphate + O2 + H2O = pyridoxal 5'-phosphate + H2O2 + NH4(+). The enzyme catalyses pyridoxine 5'-phosphate + O2 = pyridoxal 5'-phosphate + H2O2. It functions in the pathway cofactor metabolism; pyridoxal 5'-phosphate salvage; pyridoxal 5'-phosphate from pyridoxamine 5'-phosphate: step 1/1. It participates in cofactor metabolism; pyridoxal 5'-phosphate salvage; pyridoxal 5'-phosphate from pyridoxine 5'-phosphate: step 1/1. Functionally, catalyzes the oxidation of either pyridoxine 5'-phosphate (PNP) or pyridoxamine 5'-phosphate (PMP) into pyridoxal 5'-phosphate (PLP). In Crocosphaera subtropica (strain ATCC 51142 / BH68) (Cyanothece sp. (strain ATCC 51142)), this protein is Pyridoxine/pyridoxamine 5'-phosphate oxidase.